Here is a 331-residue protein sequence, read N- to C-terminus: 6-phosphogluconolactonase (331 aa).

This sequence belongs to the cycloisomerase 2 family.

It catalyses the reaction 6-phospho-D-glucono-1,5-lactone + H2O = 6-phospho-D-gluconate + H(+). Its pathway is carbohydrate degradation; pentose phosphate pathway; D-ribulose 5-phosphate from D-glucose 6-phosphate (oxidative stage): step 2/3. Functionally, catalyzes the hydrolysis of 6-phosphogluconolactone to 6-phosphogluconate. The chain is 6-phosphogluconolactonase from Klebsiella pneumoniae (strain 342).